A 326-amino-acid chain; its full sequence is Archaeal actin homolog (326 aa).

Residues 10-14 (YGDTK), S179, Q231, 285-288 (GGSN), and Q311 contribute to the ATP site.

It belongs to the thermophilic archaeal actin family.

Polymerizes into bundles of filaments, forming a helix with a filament width of 5.5 nm and an axial repeating unit of 5.5 nm. Polymerization of Ta0583 requires NTP and is optimal with ATP, but GTP, UTP, CTP, and even the deoxy form of NTP can also support the polymerization reaction. Nucleoside diphosphate or AMP-PNP does not support polymerization. This Thermoplasma acidophilum (strain ATCC 25905 / DSM 1728 / JCM 9062 / NBRC 15155 / AMRC-C165) protein is Archaeal actin homolog.